The following is a 71-amino-acid chain: uncharacterized protein (71 aa).

A helical transmembrane segment spans residues Ile2 to Met24. Residues Pro48 to Arg71 form a disordered region. A compositionally biased stretch (polar residues) spans Ala49–Arg71.

It localises to the membrane. This is an uncharacterized protein from Archaeoglobus fulgidus (strain ATCC 49558 / DSM 4304 / JCM 9628 / NBRC 100126 / VC-16).